We begin with the raw amino-acid sequence, 282 residues long: Bifunctional protein FolD (282 aa).

Residues 167 to 169 (GRS) and Ser192 each bind NADP(+).

This sequence belongs to the tetrahydrofolate dehydrogenase/cyclohydrolase family. Homodimer.

It carries out the reaction (6R)-5,10-methylene-5,6,7,8-tetrahydrofolate + NADP(+) = (6R)-5,10-methenyltetrahydrofolate + NADPH. The catalysed reaction is (6R)-5,10-methenyltetrahydrofolate + H2O = (6R)-10-formyltetrahydrofolate + H(+). Its pathway is one-carbon metabolism; tetrahydrofolate interconversion. Its function is as follows. Catalyzes the oxidation of 5,10-methylenetetrahydrofolate to 5,10-methenyltetrahydrofolate and then the hydrolysis of 5,10-methenyltetrahydrofolate to 10-formyltetrahydrofolate. The polypeptide is Bifunctional protein FolD (Acidobacterium capsulatum (strain ATCC 51196 / DSM 11244 / BCRC 80197 / JCM 7670 / NBRC 15755 / NCIMB 13165 / 161)).